Here is a 1240-residue protein sequence, read N- to C-terminus: DNA polymerase catalytic subunit (1240 aa).

The span at 1–26 (MFCAAGGPASPGGKSAARAASGFFAP) shows a compositional bias: low complexity. 3 disordered regions span residues 1–65 (MFCA…PAQR), 646–695 (GLDK…RETG), and 1103–1139 (AAAP…ASKP). Polar residues predominate over residues 44 to 56 (NFYNPHLAQTGTQ). Over residues 669–688 (NGDEDKDDDEDGDEDGDERE) the composition is skewed to acidic residues.

The protein belongs to the DNA polymerase type-B family. Forms a complex with the ssDNA-binding protein UL29, the DNA polymerase processivity factor, and the alkaline exonuclease. Interacts with the putative helicase-primase complex subunit UL8; this interaction may coordinate leading and lagging strand DNA synthesis at the replication fork.

The protein resides in the host nucleus. It carries out the reaction DNA(n) + a 2'-deoxyribonucleoside 5'-triphosphate = DNA(n+1) + diphosphate. The catalysed reaction is Endonucleolytic cleavage to 5'-phosphomonoester.. Its function is as follows. Replicates viral genomic DNA. The replication complex is composed of six viral proteins: the DNA polymerase, processivity factor, primase, primase-associated factor, helicase, and ssDNA-binding protein. Additionally, the polymerase contains an intrinsic ribonuclease H (RNase H) activity that specifically degrades RNA/DNA heteroduplexes or duplex DNA substrates in the 5' to 3' direction. Therefore, it can catalyze the excision of the RNA primers that initiate the synthesis of Okazaki fragments at a replication fork during viral DNA replication. The protein is DNA polymerase catalytic subunit of Human herpesvirus 2 (strain 186) (HHV-2).